Here is a 239-residue protein sequence, read N- to C-terminus: LexA repressor (239 aa).

Residues 26–46 constitute a DNA-binding region (H-T-H motif); sequence FDEMKDALDLASKSGIHRLIT. Positions 84–107 are disordered; it reads SPSVIEGSLGKPQPVATPAPAKSV. Active-site for autocatalytic cleavage activity residues include S159 and K197.

Belongs to the peptidase S24 family. As to quaternary structure, homodimer.

The catalysed reaction is Hydrolysis of Ala-|-Gly bond in repressor LexA.. Its function is as follows. Represses a number of genes involved in the response to DNA damage (SOS response), including recA and lexA. In the presence of single-stranded DNA, RecA interacts with LexA causing an autocatalytic cleavage which disrupts the DNA-binding part of LexA, leading to derepression of the SOS regulon and eventually DNA repair. The sequence is that of LexA repressor from Rhizobium johnstonii (strain DSM 114642 / LMG 32736 / 3841) (Rhizobium leguminosarum bv. viciae).